The chain runs to 557 residues: Urocanate hydratase (557 aa).

Residues 53-54 (GG), Q131, 177-179 (GMG), E197, R202, 243-244 (NA), 264-268 (QTSAH), 274-275 (YL), and Y323 contribute to the NAD(+) site. C411 is a catalytic residue. G493 serves as a coordination point for NAD(+).

Belongs to the urocanase family. NAD(+) serves as cofactor.

It is found in the cytoplasm. It carries out the reaction 4-imidazolone-5-propanoate = trans-urocanate + H2O. It participates in amino-acid degradation; L-histidine degradation into L-glutamate; N-formimidoyl-L-glutamate from L-histidine: step 2/3. Its function is as follows. Catalyzes the conversion of urocanate to 4-imidazolone-5-propionate. In Pseudomonas entomophila (strain L48), this protein is Urocanate hydratase.